The sequence spans 148 residues: Transcriptional regulator MraZ (148 aa).

2 consecutive SpoVT-AbrB domains span residues 5-53 and 82-125; these read ETAI…VEKE and SALL…SEQA.

Belongs to the MraZ family. As to quaternary structure, forms oligomers.

It localises to the cytoplasm. The protein localises to the nucleoid. The chain is Transcriptional regulator MraZ from Xylella fastidiosa (strain 9a5c).